Reading from the N-terminus, the 197-residue chain is uncharacterized protein (197 aa).

4 consecutive transmembrane segments (helical) span residues 11–31 (IALIVVGIIALFLPWLTISAS), 85–105 (STFMMIFGIIPIILYIASIFV), 109–129 (AVVVGAGIAGITCASIFVVLF), and 174–194 (VGTGWYLTMIIGLALIAYPFI).

It localises to the cell membrane. This is an uncharacterized protein from Methanocaldococcus jannaschii (strain ATCC 43067 / DSM 2661 / JAL-1 / JCM 10045 / NBRC 100440) (Methanococcus jannaschii).